Consider the following 209-residue polypeptide: Uracil phosphoribosyltransferase (209 aa).

5-phospho-alpha-D-ribose 1-diphosphate is bound by residues arginine 79, arginine 104, and 131–139 (DPMLATGNS). Residues isoleucine 194 and 199–201 (GDA) each bind uracil. Aspartate 200 is a binding site for 5-phospho-alpha-D-ribose 1-diphosphate.

Belongs to the UPRTase family. Mg(2+) serves as cofactor.

It catalyses the reaction UMP + diphosphate = 5-phospho-alpha-D-ribose 1-diphosphate + uracil. It functions in the pathway pyrimidine metabolism; UMP biosynthesis via salvage pathway; UMP from uracil: step 1/1. Its activity is regulated as follows. Allosterically activated by GTP. Functionally, catalyzes the conversion of uracil and 5-phospho-alpha-D-ribose 1-diphosphate (PRPP) to UMP and diphosphate. This is Uracil phosphoribosyltransferase from Rhizobium meliloti (strain 1021) (Ensifer meliloti).